We begin with the raw amino-acid sequence, 520 residues long: MSDDRKAIKRALISVYDKTGLEDLAQALHRENVEIVSTGSTAAKIAELGIPVTPVEELTGFPECLEGRVKTLHPKVHAGILADTRKEDHLRQLKELEVAPFQLVVVNLYPFAETVASGADFDACVEQIDIGGPSMVRAAAKNHPSVAVVVSPNRYEDVQEALKTGGFSRAERTKLAAEAFRHTATYDVTVATWMSEQLAAEDSETEFPGWIGTTNTLSRSLRYGENPHQSAALYVGNIRGLAQAKQFHGKEMSYNNYTDSDAAWRAAWDHERPCVAIIKHANPCGIAVSDESIAAAHREAHACDSVSAFGGVIASNREVSVEMANQVAEIFTEVIIAPSYEEGAVEILSQKKNIRILQAEAPVRKGFESREISGGLLVQERDLIHAEGDNSANWTLAAGSAVSPEVLKDLEFAWTAVRSVKSNAILLAKNGATVGVGMGQVNRVDSARLAVDRAGAERATGSVAASDAFFPFADGFEVLAEAGITAVVQPGGSIRDNEVIEAANKAGVTMYLTGARHFAH.

Residues 1-150 (MSDDRKAIKR…KNHPSVAVVV (150 aa)) form the MGS-like domain.

It belongs to the PurH family.

The catalysed reaction is (6R)-10-formyltetrahydrofolate + 5-amino-1-(5-phospho-beta-D-ribosyl)imidazole-4-carboxamide = 5-formamido-1-(5-phospho-D-ribosyl)imidazole-4-carboxamide + (6S)-5,6,7,8-tetrahydrofolate. The enzyme catalyses IMP + H2O = 5-formamido-1-(5-phospho-D-ribosyl)imidazole-4-carboxamide. It functions in the pathway purine metabolism; IMP biosynthesis via de novo pathway; 5-formamido-1-(5-phospho-D-ribosyl)imidazole-4-carboxamide from 5-amino-1-(5-phospho-D-ribosyl)imidazole-4-carboxamide (10-formyl THF route): step 1/1. It participates in purine metabolism; IMP biosynthesis via de novo pathway; IMP from 5-formamido-1-(5-phospho-D-ribosyl)imidazole-4-carboxamide: step 1/1. The protein is Bifunctional purine biosynthesis protein PurH of Corynebacterium glutamicum (strain R).